The primary structure comprises 373 residues: Glutamate 5-kinase (373 aa).

Lysine 12 provides a ligand contact to ATP. Substrate contacts are provided by serine 52, aspartate 139, and asparagine 154. Position 216–222 (216–222 (TGGMVTK)) interacts with ATP. The PUA domain occupies 281-359 (RGNICIDDGA…DEINTVLAGN (79 aa)).

This sequence belongs to the glutamate 5-kinase family.

It is found in the cytoplasm. The catalysed reaction is L-glutamate + ATP = L-glutamyl 5-phosphate + ADP. It functions in the pathway amino-acid biosynthesis; L-proline biosynthesis; L-glutamate 5-semialdehyde from L-glutamate: step 1/2. Functionally, catalyzes the transfer of a phosphate group to glutamate to form L-glutamate 5-phosphate. The sequence is that of Glutamate 5-kinase from Dehalococcoides mccartyi (strain ATCC BAA-2266 / KCTC 15142 / 195) (Dehalococcoides ethenogenes (strain 195)).